The sequence spans 200 residues: Recombination protein RecR (200 aa).

The C4-type zinc-finger motif lies at 57-72; it reads CRQCRTLTEQELCPQC. A Toprim domain is found at 80–175; sequence TQLCVVEGPT…AATRIAHGVP (96 aa).

It belongs to the RecR family.

Functionally, may play a role in DNA repair. It seems to be involved in an RecBC-independent recombinational process of DNA repair. It may act with RecF and RecO. The chain is Recombination protein RecR from Pseudomonas putida (strain GB-1).